We begin with the raw amino-acid sequence, 296 residues long: MGTPWRKRKGIAGPGLPNLSCALVLCLSRSQPRTQVGTMSPAIALAFLPLVVTLLVRYRHYFRLLVGTVLLRSLRDCLSGLRIEERAFSYVLTHALPGDPGHILTTLDHWSSHCEYLSHMGPVKGQILMRLVEEKAPACVLELGTYCGYSTLLIAQALPPGGRLLTVERDPRTAAVAEKLIRLAGFDEHMVELIVGSSEEVIPCLRTQYQLSRADLVLLIHRPRCYLRDLQLLEAHALLPAGATVLADHVLFPGAPRFLQYAKSCGRYRCRLYHTGLPDFPAIKDGIAQLTYAGPG.

Residues 36 to 56 (VGTMSPAIALAFLPLVVTLLV) form a helical membrane-spanning segment. S-adenosyl-L-methionine is bound by residues glutamate 142, 144-145 (GT), serine 150, glutamate 168, and serine 198.

It belongs to the class I-like SAM-binding methyltransferase superfamily. Cation-dependent O-methyltransferase family. In terms of assembly, interacts with LHFPL5, PCDH15, TMC1, TMC2 and TMIE. Interacts directly with TMC1. The interaction of TOMT with TMC1 and TMC2 is required for the transportation of TMC1/2 into the stereocilia of hair cells.

The protein localises to the membrane. It is found in the cytoplasm. It localises to the endoplasmic reticulum. The enzyme catalyses a catechol + S-adenosyl-L-methionine = a guaiacol + S-adenosyl-L-homocysteine + H(+). In terms of biological role, catalyzes the O-methylation, and thereby the inactivation, of catecholamine neurotransmitters and catechol hormones. Required for auditory function. Component of the cochlear hair cell's mechanotransduction (MET) machinery. Involved in the assembly of the asymmetric tip-link MET complex. Required for transportation of TMC1 and TMC2 proteins into the mechanically sensitive stereocilia of the hair cells. The function in MET is independent of the enzymatic activity. The chain is Transmembrane O-methyltransferase from Macaca mulatta (Rhesus macaque).